Consider the following 210-residue polypeptide: Somatotropin (210 aa).

Positions M1–A22 are cleaved as a signal peptide. A Zn(2+)-binding site is contributed by H38. C71 and C183 are joined by a disulfide. E192 is a binding site for Zn(2+). C200 and C208 are disulfide-bonded.

This sequence belongs to the somatotropin/prolactin family.

The protein localises to the secreted. Functionally, growth hormone plays an important role in growth control and is involved in the regulation of several anabolic processes. Implicated as an osmoregulatory substance important for seawater adaptation. The chain is Somatotropin (gh) from Oncorhynchus masou (Cherry salmon).